The primary structure comprises 311 residues: Pyrimidine-specific ribonucleoside hydrolase RihA (311 aa).

His240 is an active-site residue.

It belongs to the IUNH family. RihA subfamily.

Its function is as follows. Hydrolyzes with equal efficiency cytidine or uridine to ribose and cytosine or uracil, respectively. The sequence is that of Pyrimidine-specific ribonucleoside hydrolase RihA from Escherichia coli O157:H7.